The sequence spans 225 residues: ATP-dependent dethiobiotin synthetase BioD (225 aa).

12–17 is a binding site for ATP; sequence EIGKTY. Thr-16 serves as a coordination point for Mg(2+). The active site involves Lys-37. Ser-41 contributes to the substrate binding site. Residues Asp-55, 122–125, and 182–183 each bind ATP; these read EGVG and SE. Asp-55 and Glu-122 together coordinate Mg(2+).

Belongs to the dethiobiotin synthetase family. In terms of assembly, homodimer. Requires Mg(2+) as cofactor.

It is found in the cytoplasm. The catalysed reaction is (7R,8S)-7,8-diammoniononanoate + CO2 + ATP = (4R,5S)-dethiobiotin + ADP + phosphate + 3 H(+). The protein operates within cofactor biosynthesis; biotin biosynthesis; biotin from 7,8-diaminononanoate: step 1/2. Catalyzes a mechanistically unusual reaction, the ATP-dependent insertion of CO2 between the N7 and N8 nitrogen atoms of 7,8-diaminopelargonic acid (DAPA, also called 7,8-diammoniononanoate) to form a ureido ring. The polypeptide is ATP-dependent dethiobiotin synthetase BioD (Methylobacterium nodulans (strain LMG 21967 / CNCM I-2342 / ORS 2060)).